The chain runs to 253 residues: MLHKASPALSLLSSGYTGGGNLFPPSRNSSNLLFSPSGSRFSVQAAKGTNTKSLTGVVFEPFEEVKKEMELVPTTPFVSLARHKFSDDSESAINDQINVEYNVSYVYHALYAYFDRDNVGLKGFAKFFNDSSLEERGHAEMFMEYQNKRGGRVKLQSILMPVSEFDHEEKGDALHAMELALSLEKLTNEKLLKLQSVGVKNNDVQLVDFVESEFLGEQVEAIKKISEYVAQLRRIGKGHGVWHFDQMLLNDEV.

The transit peptide at 1-45 (MLHKASPALSLLSSGYTGGGNLFPPSRNSSNLLFSPSGSRFSVQA) directs the protein to the chloroplast. The tract at residues 46-82 (AKGTNTKSLTGVVFEPFEEVKKEMELVPTTPFVSLAR) is extension peptide (EP). The Ferritin-like diiron domain maps to 83-236 (HKFSDDSESA…EYVAQLRRIG (154 aa)). Positions 100, 135, 138, 184, and 218 each coordinate Fe cation.

The protein belongs to the ferritin family. In terms of assembly, oligomer of 24 subunits. There are two types of subunits: L (light) chain and H (heavy) chain. The major chain can be light or heavy, depending on the species and tissue type. The functional molecule forms a roughly spherical shell with a diameter of 12 nm and contains a central cavity into which the insoluble mineral iron core is deposited.

It is found in the plastid. It localises to the chloroplast. It catalyses the reaction 4 Fe(2+) + O2 + 4 H(+) = 4 Fe(3+) + 2 H2O. Functionally, stores iron in a soluble, non-toxic, readily available form. Important for iron homeostasis. Has ferroxidase activity. Iron is taken up in the ferrous form and deposited as ferric hydroxides after oxidation. The polypeptide is Ferritin-2, chloroplastic (FER2) (Arabidopsis thaliana (Mouse-ear cress)).